The following is a 958-amino-acid chain: Transportin MOS14 (958 aa).

The region spanning 26–93 (ADRWLQNFQG…RQSLTTLLKK (68 aa)) is the Importin N-terminal domain.

The protein belongs to the importin beta family. Interacts with RS2Z33, RSZ21, RS31A, SR34 and RAN1.

It is found in the nucleus. Functionally, functions as a nuclear import receptor for serine-arginine rich (SR) proteins. Regulates nuclear import of SR proteins that are required for proper splicing of the two resistance (R) genes SNC1 and RPS4, a crucial step for their functions in plant immunity. The protein is Transportin MOS14 of Arabidopsis thaliana (Mouse-ear cress).